Reading from the N-terminus, the 130-residue chain is Nascent polypeptide-associated complex protein (130 aa).

Positions 8–75 (PKMMRQMQKM…AKNIKKDDIK (68 aa)) constitute an NAC-A/B domain.

It belongs to the NAC-alpha family. Homodimer. Interacts with the ribosome. Binds ribosomal RNA.

Contacts the emerging nascent chain on the ribosome. The chain is Nascent polypeptide-associated complex protein from Methanococcus aeolicus (strain ATCC BAA-1280 / DSM 17508 / OCM 812 / Nankai-3).